The following is an 89-amino-acid chain: Cornifin-A (89 aa).

The segment at M1–P29 is disordered. A run of 8 repeats spans residues S3–P14, Q18–P29, E31–K38, E39–P46, E47–P54, E55–P62, E63–P70, and E71–T78. Residues S3–P29 form a 2 X 12 AA approximate repeats region. Residues E31–T78 are 6 X 8 AA approximate tandem repeats. The tract at residues K68–K89 is disordered. A compositionally biased stretch (polar residues) spans S75–K89.

It belongs to the cornifin (SPRR) family.

The protein resides in the cytoplasm. Its function is as follows. Cross-linked envelope protein of keratinocytes. It is a keratinocyte protein that first appears in the cell cytosol, but ultimately becomes cross-linked to membrane proteins by transglutaminase. All that results in the formation of an insoluble envelope beneath the plasma membrane. The protein is Cornifin-A (SPRR1A) of Homo sapiens (Human).